Consider the following 388-residue polypeptide: Nuclear hormone receptor family member nhr-16 (388 aa).

The nuclear receptor DNA-binding region spans 11–86; that stretch reads FLKCAICQES…VGMNPAGVQQ (76 aa). 2 NR C4-type zinc fingers span residues 14-34 and 50-74; these read CAICQESAEGFHFGAEACRAC and CQGNNDCDVTINIRCMCRACRYIKC. The NR LBD domain maps to 115-387; that stretch reads PPSSLMLHIP…DEFYNLMSGR (273 aa).

This sequence belongs to the nuclear hormone receptor family.

It is found in the nucleus. Orphan nuclear receptor. The chain is Nuclear hormone receptor family member nhr-16 (nhr-16) from Caenorhabditis elegans.